A 428-amino-acid polypeptide reads, in one-letter code: Anaerobic glycerol-3-phosphate dehydrogenase subunit B (428 aa).

It belongs to the anaerobic G-3-P dehydrogenase subunit B family. Composed of a catalytic GlpA/B dimer and of membrane bound GlpC. It depends on FMN as a cofactor.

It catalyses the reaction a quinone + sn-glycerol 3-phosphate = dihydroxyacetone phosphate + a quinol. It functions in the pathway polyol metabolism; glycerol degradation via glycerol kinase pathway; glycerone phosphate from sn-glycerol 3-phosphate (anaerobic route): step 1/1. Functionally, conversion of glycerol 3-phosphate to dihydroxyacetone. Uses fumarate or nitrate as electron acceptor. The protein is Anaerobic glycerol-3-phosphate dehydrogenase subunit B of Actinobacillus pleuropneumoniae serotype 5b (strain L20).